The chain runs to 306 residues: Polyisoprenyl-teichoic acid--peptidoglycan teichoic acid transferase TagU (306 aa).

Residues 1–11 (MRNERRKKKKT) lie on the Cytoplasmic side of the membrane. Residues 12-32 (LLLTILTIIGLLVLGTGGYAY) form a helical; Signal-anchor for type II membrane protein membrane-spanning segment. The Extracellular portion of the chain corresponds to 33–306 (YLWHKAASTV…TKELKESLEK (274 aa)).

It belongs to the LytR/CpsA/Psr (LCP) family. As to quaternary structure, interacts with MreB. Interacts with FloT.

It is found in the cell membrane. It localises to the membrane raft. It participates in cell wall biogenesis. In terms of biological role, may catalyze the final step in cell wall teichoic acid biosynthesis, the transfer of the anionic cell wall polymers (APs) from their lipid-linked precursor to the cell wall peptidoglycan (PG). The protein is Polyisoprenyl-teichoic acid--peptidoglycan teichoic acid transferase TagU of Bacillus subtilis (strain 168).